The sequence spans 162 residues: Putative 4-hydroxy-4-methyl-2-oxoglutarate aldolase (162 aa).

Substrate contacts are provided by residues 75–78 and Arg97; that span reads GDML. Asp98 serves as a coordination point for a divalent metal cation.

The protein belongs to the class II aldolase/RraA-like family. As to quaternary structure, homotrimer. Requires a divalent metal cation as cofactor.

The catalysed reaction is 4-hydroxy-4-methyl-2-oxoglutarate = 2 pyruvate. It catalyses the reaction oxaloacetate + H(+) = pyruvate + CO2. Functionally, catalyzes the aldol cleavage of 4-hydroxy-4-methyl-2-oxoglutarate (HMG) into 2 molecules of pyruvate. Also contains a secondary oxaloacetate (OAA) decarboxylase activity due to the common pyruvate enolate transition state formed following C-C bond cleavage in the retro-aldol and decarboxylation reactions. This Pseudomonas paraeruginosa (strain DSM 24068 / PA7) (Pseudomonas aeruginosa (strain PA7)) protein is Putative 4-hydroxy-4-methyl-2-oxoglutarate aldolase.